The primary structure comprises 353 residues: Mas-related G-protein coupled receptor member B5 (353 aa).

Residues 1–67 (MPDSPTESYG…SCIITFNTLN (67 aa)) lie on the Extracellular side of the membrane. N-linked (GlcNAc...) asparagine glycosylation is found at Asn-26 and Asn-44. A helical transmembrane segment spans residues 68–90 (FLTATISVVGTAGNATVLRLLGF). The Cytoplasmic segment spans residues 91–96 (HMHRYA). Residues 97-117 (FSVYVFNLAGADFLYLCTQTV) form a helical membrane-spanning segment. Over 118-131 (YSLECVLQFDNSYF) the chain is Extracellular. The chain crosses the membrane as a helical span at residues 132–152 (YFLLTILMFAYLAALCMIPAI). The Cytoplasmic portion of the chain corresponds to 153–180 (STERCLSVTWPIWYHCQRPRHTSATVCA). A helical transmembrane segment spans residues 181–201 (LFWAFSLLLRLLLGQGCGFLF). The Extracellular segment spans residues 202-213 (GKYDYYFCRYCS). Residues 214-234 (FITTAFLIVLFVVPFVSSLAM) traverse the membrane as a helical segment. Topologically, residues 235–253 (LTKIICGSHRIPVTRFYVT) are cytoplasmic. A helical membrane pass occupies residues 254–274 (IAVTVLVFTFFGLPVGIISLL). At 275–289 (LPRIVVFRGVFYIYK) the chain is on the extracellular side. Residues 290–310 (IVTFLYSVNCCANPIIYFLIG) form a helical membrane-spanning segment. Topologically, residues 311 to 353 (SIRHHRLQRQSLKLLLQRAMQDTPEEEGGVKGPSQKSNELEIV) are cytoplasmic. The segment at 333 to 353 (TPEEEGGVKGPSQKSNELEIV) is disordered.

This sequence belongs to the G-protein coupled receptor 1 family. Mas subfamily. As to expression, expressed strongly in newborn dorsal root ganglia, adult dorsal root ganglia and trigeminal ganlia.

It localises to the membrane. Its function is as follows. Orphan receptor. Probably involved in the function of nociceptive neurons. May regulate nociceptor function and/or development, including the sensation or modulation of pain. The polypeptide is Mas-related G-protein coupled receptor member B5 (Mrgprb5) (Rattus norvegicus (Rat)).